The sequence spans 592 residues: Nucleolar protein 58 (592 aa).

Residues 285–410 (IAPNLTALVG…LERKLAAMEG (126 aa)) form the Nop domain. Residues 443-592 (DADALSSDEP…QKKKKKKGEE (150 aa)) form a disordered region. Residues 450-462 (DEPKSKKDKKLIE) show a composition bias toward basic and acidic residues. Over residues 463–478 (EVSDEEMADADSDEEP) the composition is skewed to acidic residues. Composition is skewed to basic and acidic residues over residues 505-515 (GKDAELEKLAE) and 557-571 (KKAS…KRSD). Positions 582–592 (KQKKKKKKGEE) are enriched in basic residues.

It belongs to the NOP5/NOP56 family.

Its subcellular location is the nucleus. The protein resides in the nucleolus. Its function is as follows. Required for pre-18S rRNA processing. May bind microtubules. The protein is Nucleolar protein 58 (nop58) of Aspergillus clavatus (strain ATCC 1007 / CBS 513.65 / DSM 816 / NCTC 3887 / NRRL 1 / QM 1276 / 107).